Here is a 473-residue protein sequence, read N- to C-terminus: Ribulose bisphosphate carboxylase large chain (473 aa).

2 residues coordinate substrate: Asn-116 and Thr-166. The active-site Proton acceptor is Lys-168. Lys-170 contributes to the substrate binding site. 3 residues coordinate Mg(2+): Lys-194, Asp-196, and Glu-197. Lys-194 bears the N6-carboxylysine mark. His-287 serves as the catalytic Proton acceptor. The substrate site is built by Arg-288, His-320, and Ser-372.

This sequence belongs to the RuBisCO large chain family. Type I subfamily. In terms of assembly, heterohexadecamer of 8 large chains and 8 small chains. Mg(2+) is required as a cofactor.

It carries out the reaction 2 (2R)-3-phosphoglycerate + 2 H(+) = D-ribulose 1,5-bisphosphate + CO2 + H2O. It catalyses the reaction D-ribulose 1,5-bisphosphate + O2 = 2-phosphoglycolate + (2R)-3-phosphoglycerate + 2 H(+). RuBisCO catalyzes two reactions: the carboxylation of D-ribulose 1,5-bisphosphate, the primary event in carbon dioxide fixation, as well as the oxidative fragmentation of the pentose substrate. Both reactions occur simultaneously and in competition at the same active site. This is Ribulose bisphosphate carboxylase large chain from Nitrosomonas europaea (strain ATCC 19718 / CIP 103999 / KCTC 2705 / NBRC 14298).